The chain runs to 1832 residues: Putative transcription factor capicua (1832 aa).

S41 and S49 each carry phosphoserine. Disordered regions lie at residues 66 to 121 (ANQS…EVGS), 135 to 227 (STVG…AHPH), 323 to 353 (QQQQQHQQLQQQQQLQQQQQSPPQMPLNHNN), 389 to 427 (NQRQKQQQEEPDDQLDDDVFETTTPGISANSKKQTAAMR), 444 to 493 (DGAA…IRRP), 563 to 619 (DRRK…GGQG), 690 to 739 (RERV…SGGE), 784 to 845 (QPTG…VSAP), 874 to 938 (PMHH…EDDE), 1069 to 1105 (TSTLSSSSSNPANNEAPNKFSNFPTQHQPTTTTTISC), 1151 to 1178 (GQDEEEEEDEGNAEKQENPKVAGKEQVT), 1457 to 1602 (DGGM…STAA), 1632 to 1668 (QPEDCQSPSAIAVPSSPRVYGTNYRKKNTAPPPVQKL), 1701 to 1733 (LESSDQTGRSPRTPKTPLQSARSDASEKGHRKV), and 1789 to 1817 (ASCTPHSAGPNTPSDSNSSSTTLSASSTS). Residues 96 to 121 (NANNNSSNNNTSSSNNNNNSNWEVGS) are compositionally biased toward low complexity. A compositionally biased stretch (pro residues) spans 172-186 (PPPPPPASLPAPSAP). 3 stretches are compositionally biased toward low complexity: residues 187–203 (PTSGSSSSHNSVGHATS), 211–223 (QQQHQQQQQHQQQ), and 323–342 (QQQQQHQQLQQQQQLQQQQQ). The span at 397–408 (EEPDDQLDDDVF) shows a compositional bias: acidic residues. Over residues 409 to 422 (ETTTPGISANSKKQ) the composition is skewed to polar residues. A compositionally biased stretch (low complexity) spans 446-484 (AAGAPATSAAKRRSQSLSALQQQQQQQQQAGAAGTAAGQ). A DNA-binding region (HMG box) is located at residues 490 to 558 (IRRPMNAFMI…AHFKLHPEWK (69 aa)). A compositionally biased stretch (gly residues) spans 610-619 (GGSGSCGGQG). The segment at 834–1832 (GSASGGGVVS…TSAADVFQYY (999 aa)) is interaction with gro. Over residues 903-914 (ESSEKDKPALDD) the composition is skewed to basic and acidic residues. The span at 915–938 (QERDEVEEEDEDEEDDDEDDEDDE) shows a compositional bias: acidic residues. The span at 1078–1091 (NPANNEAPNKFSNF) shows a compositional bias: polar residues. Low complexity predominate over residues 1092-1105 (PTQHQPTTTTTISC). Positions 1462-1471 (GCASAAASGG) are enriched in low complexity. Residues 1503–1525 (LSQSKSESNVSFGANLGASNGQH) show a composition bias toward polar residues. The span at 1547-1589 (NSSNLSSALPTPTSSTTTPNSDEQLPLTPTTSSSNSNLNQQQP) shows a compositional bias: low complexity. T1716 is modified (phosphothreonine). Residues 1724-1733 (DASEKGHRKV) are compositionally biased toward basic and acidic residues. The span at 1789-1799 (ASCTPHSAGPN) shows a compositional bias: polar residues. Residues 1800–1817 (TPSDSNSSSTTLSASSTS) are compositionally biased toward low complexity.

In terms of assembly, interacts with gro. As to expression, expressed in the central region of embryos. Also expressed in ovarian follicle cells, the wing imaginal disks and the wing pouch.

The protein resides in the nucleus. Functionally, transcriptional repressor required for the specification of numerous cell types during embryonic development. Required for terminal patterning of early embryos. May associate with gro to repress tll and hkb, restricting their expression to embryonic terminal poles where they initiate correct development of head and tail structures. Required for dorsoventral patterning of oocytes and early embryos. Cooperates with dl to repress zen and other dorsal specific genes within the embryo and promotes expression of the ventralizing factor pip in ovarian follicle cells. Required during wing development for the specification of intervein areas, where it mediates localized repression of vein specific genes such as aos, dpp and vvl. The sequence is that of Putative transcription factor capicua (cic) from Drosophila melanogaster (Fruit fly).